The primary structure comprises 48 residues: MARYRCCRSRSRCRRRRRRCHRRRRRCSRRRRRRVCCRRYTVIRCRRR.

The protein belongs to the protamine P1 family. Testis.

Its subcellular location is the nucleus. It localises to the chromosome. Functionally, protamines substitute for histones in the chromatin of sperm during the haploid phase of spermatogenesis. They compact sperm DNA into a highly condensed, stable and inactive complex. The protein is Sperm protamine P1 (PRM1) of Murina cyclotis (Round-eared tube-nosed bat).